Reading from the N-terminus, the 392-residue chain is uncharacterized protein (392 aa).

This sequence belongs to the glycosyltransferase group 1 family. Glycosyltransferase 4 subfamily.

This is an uncharacterized protein from Methanocaldococcus jannaschii (strain ATCC 43067 / DSM 2661 / JAL-1 / JCM 10045 / NBRC 100440) (Methanococcus jannaschii).